The following is a 429-amino-acid chain: 3-phosphoshikimate 1-carboxyvinyltransferase (429 aa).

3-phosphoshikimate is bound by residues lysine 22, serine 23, and arginine 27. Lysine 22 contacts phosphoenolpyruvate. The phosphoenolpyruvate site is built by glycine 94 and arginine 122. 3-phosphoshikimate-binding residues include serine 167, glutamine 169, aspartate 315, and lysine 342. Glutamine 169 is a phosphoenolpyruvate binding site. The active-site Proton acceptor is the aspartate 315. Positions 346 and 388 each coordinate phosphoenolpyruvate.

The protein belongs to the EPSP synthase family. In terms of assembly, monomer.

It is found in the cytoplasm. It catalyses the reaction 3-phosphoshikimate + phosphoenolpyruvate = 5-O-(1-carboxyvinyl)-3-phosphoshikimate + phosphate. It functions in the pathway metabolic intermediate biosynthesis; chorismate biosynthesis; chorismate from D-erythrose 4-phosphate and phosphoenolpyruvate: step 6/7. In terms of biological role, catalyzes the transfer of the enolpyruvyl moiety of phosphoenolpyruvate (PEP) to the 5-hydroxyl of shikimate-3-phosphate (S3P) to produce enolpyruvyl shikimate-3-phosphate and inorganic phosphate. The protein is 3-phosphoshikimate 1-carboxyvinyltransferase of Geobacter sulfurreducens (strain ATCC 51573 / DSM 12127 / PCA).